The primary structure comprises 72 residues: Putative D-serine transporter DsdX-like protein (72 aa).

This is Putative D-serine transporter DsdX-like protein (dsdX) from Escherichia coli O157:H7.